Here is a 502-residue protein sequence, read N- to C-terminus: ATP synthase subunit alpha (502 aa).

Residue 169-176 (GDRQTGKT) coordinates ATP.

It belongs to the ATPase alpha/beta chains family. F-type ATPases have 2 components, CF(1) - the catalytic core - and CF(0) - the membrane proton channel. CF(1) has five subunits: alpha(3), beta(3), gamma(1), delta(1), epsilon(1). CF(0) has three main subunits: a(1), b(2) and c(9-12). The alpha and beta chains form an alternating ring which encloses part of the gamma chain. CF(1) is attached to CF(0) by a central stalk formed by the gamma and epsilon chains, while a peripheral stalk is formed by the delta and b chains.

It is found in the cell membrane. It carries out the reaction ATP + H2O + 4 H(+)(in) = ADP + phosphate + 5 H(+)(out). In terms of biological role, produces ATP from ADP in the presence of a proton gradient across the membrane. The alpha chain is a regulatory subunit. The polypeptide is ATP synthase subunit alpha (Desulfitobacterium hafniense (strain DSM 10664 / DCB-2)).